We begin with the raw amino-acid sequence, 379 residues long: Multicilin (379 aa).

The tract at residues 1 to 129 (MQACEGSAAG…AMDDLIADSS (129 aa)) is necessary and sufficient for its degradation during the cell cycle. 2 disordered regions span residues 26 to 71 (SRRT…APLP) and 88 to 107 (LGTE…PSLQ). Residues 92–107 (ASPSGDSSASQNPSLQ) show a composition bias toward polar residues. Positions 130-379 (SLMSPPLTNS…GGYKFRWVPS (250 aa)) are necessary and sufficient for proper nuclear localization. Positions 171–241 (PPPTEQYWKE…SVLDKLMITQ (71 aa)) are necessary and sufficient for interaction with GMNN and sufficient for homodimerization. The stretch at 175–223 (EQYWKEVADQNQRALGTALIENNQLHVTLTQKQEEIASLRERNVQLKEL) forms a coiled coil. A compositionally biased stretch (basic and acidic residues) spans 291–309 (NRDPKRPRLQPEPDSKDCS). Residues 291-312 (NRDPKRPRLQPEPDSKDCSSRN) are disordered.

This sequence belongs to the geminin family. Heterodimer (via coiled-coil domain) with GMNN (via coiled-coil domain); targets GMNN to the nucleus. Can form homodimers (in vitro, via coiled-coil domain), but these are much less stable than the heterodimer formed with GMNN.

The protein localises to the nucleus. Its function is as follows. Transcription regulator specifically required for multiciliate cell differentiation. Acts in a multiprotein complex containing E2F4 and E2F5 that binds and activates genes required for centriole biogenesis. Required for the deuterosome-mediated acentriolar pathway. Plays a role in mitotic cell cycle progression by promoting cell cycle exit. Modulates GMNN activity by reducing its affinity for CDT1. The polypeptide is Multicilin (Mcidas) (Mus musculus (Mouse)).